The sequence spans 165 residues: Secreted acidic protein 2 (165 aa).

2 stretches are compositionally biased toward acidic residues: residues 1 to 58 (WSXS…DDSG) and 80 to 102 (ESSDDDNERDDTSDDSVGDDAYN). Residues 1–112 (WSXSGDDDDD…DDSQAGELNS (112 aa)) form a disordered region. The segment covering 103–112 (DDSQAGELNS) has biased composition (polar residues).

In terms of tissue distribution, component of the acid-insoluble and acid-soluble organic matrix of the aragonitic skeleton (at protein level).

The protein resides in the secreted. The sequence is that of Secreted acidic protein 2 from Acropora millepora (Staghorn coral).